Reading from the N-terminus, the 79-residue chain is Sulfur carrier protein TusA (79 aa).

C17 (cysteine persulfide intermediate) is an active-site residue.

The protein belongs to the sulfur carrier protein TusA family.

It is found in the cytoplasm. Sulfur carrier protein which probably makes part of a sulfur-relay system. This is Sulfur carrier protein TusA from Histophilus somni (strain 129Pt) (Haemophilus somnus).